The primary structure comprises 343 residues: L-threonine 3-dehydrogenase (343 aa).

Position 40 (Cys40) interacts with Zn(2+). Residues Thr42 and His45 each act as charge relay system in the active site. His65, Glu66, Cys95, Cys98, Cys101, and Cys109 together coordinate Zn(2+). NAD(+) is bound by residues Ile177, Asp197, Arg202, 264-266 (LGI), and 288-289 (IY).

It belongs to the zinc-containing alcohol dehydrogenase family. Homotetramer. Requires Zn(2+) as cofactor.

The protein resides in the cytoplasm. It catalyses the reaction L-threonine + NAD(+) = (2S)-2-amino-3-oxobutanoate + NADH + H(+). The protein operates within amino-acid degradation; L-threonine degradation via oxydo-reductase pathway; glycine from L-threonine: step 1/2. Its function is as follows. Catalyzes the NAD(+)-dependent oxidation of L-threonine to 2-amino-3-ketobutyrate. In Photobacterium profundum (strain SS9), this protein is L-threonine 3-dehydrogenase.